A 423-amino-acid polypeptide reads, in one-letter code: T-box protein 2 (423 aa).

The segment at residues 70–243 (LWQQFSQCGT…NNPFAKGFRD (174 aa)) is a DNA-binding region (T-box). Disordered regions lie at residues 238 to 324 (AKGF…PLRS) and 384 to 423 (VEAT…LSKP). Polar residues predominate over residues 261–283 (DATQSPPGKTASLPTHSPHPSES). The span at 302–317 (TPTTSSLSTSTTPTLS) shows a compositional bias: low complexity. The segment covering 394-404 (AEKPEVKKEQK) has biased composition (basic and acidic residues).

Post-translationally, sumoylated. Expressed in body wall muscles and a subset of pharyngeal neurons. Expressed in head neurons and occassionally tail neurons. Not expressed in the pharynx.

It localises to the nucleus. Its function is as follows. Involved in the transcriptional regulation of genes required for the development of pharyngeal muscles derived from the ABa lineage. Acts as a transcriptional repressor and binds to T-box binding sites in its own promoter to negatively autoregulate its own expression in neurons, seam cells and the gut in order to restrict its expression to certain tissues. May function together with the nfya-1-NF-Y complex to repress its own expression. Plays a role in neural fate specification in the hermaphrodite-specific neuron (HSN)/PHB neuron lineage, acting in concert with homeobox protein egl-5 and the asymmetric cell division protein ham-1. The polypeptide is T-box protein 2 (Caenorhabditis elegans).